Reading from the N-terminus, the 72-residue chain is UPF0270 protein KPK_0377 (72 aa).

The protein belongs to the UPF0270 family.

The sequence is that of UPF0270 protein KPK_0377 from Klebsiella pneumoniae (strain 342).